A 420-amino-acid polypeptide reads, in one-letter code: UDP-N-acetylglucosamine 1-carboxyvinyltransferase (420 aa).

Position 22-23 (22-23 (KN)) interacts with phosphoenolpyruvate. Arginine 91 is a binding site for UDP-N-acetyl-alpha-D-glucosamine. The active-site Proton donor is the cysteine 115. The residue at position 115 (cysteine 115) is a 2-(S-cysteinyl)pyruvic acid O-phosphothioketal. Residues 120-124 (RPVDL), 160-163 (KVSV), aspartate 305, and isoleucine 327 each bind UDP-N-acetyl-alpha-D-glucosamine.

This sequence belongs to the EPSP synthase family. MurA subfamily.

The protein localises to the cytoplasm. It catalyses the reaction phosphoenolpyruvate + UDP-N-acetyl-alpha-D-glucosamine = UDP-N-acetyl-3-O-(1-carboxyvinyl)-alpha-D-glucosamine + phosphate. Its pathway is cell wall biogenesis; peptidoglycan biosynthesis. Its function is as follows. Cell wall formation. Adds enolpyruvyl to UDP-N-acetylglucosamine. The chain is UDP-N-acetylglucosamine 1-carboxyvinyltransferase from Pectobacterium atrosepticum (strain SCRI 1043 / ATCC BAA-672) (Erwinia carotovora subsp. atroseptica).